We begin with the raw amino-acid sequence, 270 residues long: Urease accessory protein UreD (270 aa).

This sequence belongs to the UreD family. As to quaternary structure, ureD, UreF and UreG form a complex that acts as a GTP-hydrolysis-dependent molecular chaperone, activating the urease apoprotein by helping to assemble the nickel containing metallocenter of UreC. The UreE protein probably delivers the nickel.

It localises to the cytoplasm. Functionally, required for maturation of urease via the functional incorporation of the urease nickel metallocenter. The sequence is that of Urease accessory protein UreD from Synechocystis sp. (strain ATCC 27184 / PCC 6803 / Kazusa).